A 309-amino-acid chain; its full sequence is Protein FdhE homolog (309 aa).

This sequence belongs to the FdhE family.

The protein resides in the cytoplasm. Its function is as follows. Necessary for formate dehydrogenase activity. This Serratia proteamaculans (strain 568) protein is Protein FdhE homolog.